A 158-amino-acid chain; its full sequence is Inorganic pyrophosphatase (158 aa).

Glu8 lines the Mg(2+) pocket. Substrate contacts are provided by Lys16, Arg30, and Tyr42. Mg(2+) contacts are provided by Asp52, Asp57, Asp84, and Asp89. Asp89 acts as the Proton acceptor in catalysis. A substrate-binding site is contributed by Tyr125.

This sequence belongs to the PPase family. Homohexamer. Mg(2+) is required as a cofactor.

The protein localises to the cytoplasm. It catalyses the reaction diphosphate + H2O = 2 phosphate + H(+). Functionally, catalyzes the hydrolysis of inorganic pyrophosphate (PPi) forming two phosphate ions. The protein is Inorganic pyrophosphatase of Corynebacterium glutamicum (strain ATCC 13032 / DSM 20300 / JCM 1318 / BCRC 11384 / CCUG 27702 / LMG 3730 / NBRC 12168 / NCIMB 10025 / NRRL B-2784 / 534).